Consider the following 931-residue polypeptide: Netrin receptor UNC5C (931 aa).

The first 39 residues, 1 to 39 (MGKGLEGTAARCGLGMGYLLHSVVLPALAVLGASRPGSA), serve as a signal peptide directing secretion. The Extracellular segment spans residues 40-380 (AQDDDFFHEL…APDSDDVALY (341 aa)). The Ig-like domain maps to 62–159 (PHFLIEPEEA…AGTTKSRKAY (98 aa)). 9 disulfides stabilise this stretch: Cys83–Cys144, Cys95–Cys142, Cys188–Cys239, Cys272–Cys309, Cys276–Cys313, Cys287–Cys299, Cys328–Cys362, Cys332–Cys367, and Cys340–Cys352. The Ig-like C2-type domain occupies 161–256 (RIAYLRKTFE…KRKSTTATVI (96 aa)). Asn236 is a glycosylation site (N-linked (GlcNAc...) asparagine). 2 consecutive TSP type-1 domains span residues 260-314 (NGGW…TLCP) and 316-368 (DGKW…GLCM). An N-linked (GlcNAc...) asparagine glycan is attached at Asn361. A helical membrane pass occupies residues 381–401 (VGIVIAVIVCLAISVVVALFV). Residues 402–931 (YRKNHRDFES…VVSLAAEGNY (530 aa)) are Cytoplasmic-facing. Residues 530–664 (CTAFGTFNSL…EACHILTETL (135 aa)) form the ZU5 domain. Positions 850–929 (QKLCSSLDAP…ETVVSLAAEG (80 aa)) constitute a Death domain.

The protein belongs to the unc-5 family. In terms of tissue distribution, restricted to proprioceptive neurons.

The protein resides in the cell membrane. It localises to the cell surface. Its subcellular location is the synapse. It is found in the synaptosome. The protein localises to the cell projection. The protein resides in the axon. It localises to the dendrite. Its subcellular location is the growth cone. It is found in the lamellipodium. The protein localises to the filopodium. Receptor for netrin required for axon guidance. Mediates axon repulsion of neuronal growth cones in the developing nervous system upon ligand binding. Involved in dorsal root ganglion axon projection towards the spinal cord. The polypeptide is Netrin receptor UNC5C (UNC5C) (Gallus gallus (Chicken)).